A 525-amino-acid polypeptide reads, in one-letter code: MFRVLVSDKMSNDGLQPLIESDFIEIVQKNVADAEDELHTFDALLVRSATKVTEDLFNKMTSLKIVGRAGVGVDNIDIDEATKHGVIVINAPNGNTISTAEHTFAMISSLMRHIPQANISVKSREWNRTAYVGSELYGKTLGIVGLGRIGSEIAQRARAFGMTVHVFDPFLTEERAKKIGVNSRTFEEVLESADIITVHTPLTKETKGLLNKETIAKTKKGVRLINCARGGIIDEAALLEALENGHVAGAALDVFEVEPPVDNKLVDHPLVIATPHLGASTKEAQLNVAAQVSEEVLQFAKGLPVMSAINLPAMTKDEFAKIKPYHQIAGKIGSLVSQCMKEPVQDVAIQYEGTIAKLETSFITKALLSGFLKPRVDSTVNEVNAGGVAKERGISFSEKISSSESGYDNCISVKVTGDRSTFTVTATYIPHFGERIVEINGFNIDFYPTGHLVYIQHQDTTGVIGRVGRILGDNDINIATMQVGRKEKGGEAIMMLSFDRHLEDKIVKELTNVPDIVSVKLIDLP.

Residues 148–149 (RI), aspartate 168, threonine 200, 227–229 (CAR), and aspartate 253 each bind NAD(+). Arginine 229 is a catalytic residue. Glutamate 258 is a catalytic residue. Catalysis depends on histidine 276, which acts as the Proton donor. Position 276–279 (276–279 (HLGA)) interacts with NAD(+). In terms of domain architecture, ACT spans 452-524 (LVYIQHQDTT…DIVSVKLIDL (73 aa)).

Belongs to the D-isomer specific 2-hydroxyacid dehydrogenase family.

It carries out the reaction (2R)-3-phosphoglycerate + NAD(+) = 3-phosphooxypyruvate + NADH + H(+). It catalyses the reaction (R)-2-hydroxyglutarate + NAD(+) = 2-oxoglutarate + NADH + H(+). The protein operates within amino-acid biosynthesis; L-serine biosynthesis; L-serine from 3-phospho-D-glycerate: step 1/3. In bacteria displays feedback inhibition by L-serine. In terms of biological role, catalyzes the reversible oxidation of 3-phospho-D-glycerate to 3-phosphonooxypyruvate, the first step of the phosphorylated L-serine biosynthesis pathway. Also catalyzes the reversible oxidation of 2-hydroxyglutarate to 2-oxoglutarate. The polypeptide is D-3-phosphoglycerate dehydrogenase (serA) (Bacillus subtilis (strain 168)).